Here is a 222-residue protein sequence, read N- to C-terminus: Peptide methionine sulfoxide reductase MsrA (222 aa).

The active site involves cysteine 60.

It belongs to the MsrA Met sulfoxide reductase family.

The catalysed reaction is L-methionyl-[protein] + [thioredoxin]-disulfide + H2O = L-methionyl-(S)-S-oxide-[protein] + [thioredoxin]-dithiol. It carries out the reaction [thioredoxin]-disulfide + L-methionine + H2O = L-methionine (S)-S-oxide + [thioredoxin]-dithiol. Has an important function as a repair enzyme for proteins that have been inactivated by oxidation. Catalyzes the reversible oxidation-reduction of methionine sulfoxide in proteins to methionine. The protein is Peptide methionine sulfoxide reductase MsrA of Pseudomonas putida (strain GB-1).